The following is a 555-amino-acid chain: Putative protein NRT1/ PTR FAMILY 2.14 (555 aa).

A run of 12 helical transmembrane segments spans residues 62 to 82 (VTLINTWSALTNFAPIIGAFI), 93 to 113 (IVFGSIAELLGMLVLTFTSLV), 135 to 155 (YSQLYVLLSGLFLLSVGTGGI), 181 to 201 (FFSWYYTTHTIVQLVSMTLVL), 209 to 229 (WGIGFAIPTVLNFFALLLLFV), 234 to 254 (YVFVKPEGSVFSGVFKVLVAA), 319 to 339 (IKSIISIIPIFASSIIGFLAM), 363 to 383 (LIPPASITVISLLNIGIWLPF), 405 to 425 (LQKVGIGNIFSISTMLISGIV), 441 to 461 (VFWLTPQQVLMGFYQVFTIVG), 480 to 500 (SLLYLGLSLASYLSSAMVSIV), and 523 to 543 (CFYYFIAALSTLNFIFFFWCA).

It belongs to the major facilitator superfamily. Proton-dependent oligopeptide transporter (POT/PTR) (TC 2.A.17) family. In terms of tissue distribution, not detected.

It is found in the membrane. The polypeptide is Putative protein NRT1/ PTR FAMILY 2.14 (NPF2.14) (Arabidopsis thaliana (Mouse-ear cress)).